Here is a 139-residue protein sequence, read N- to C-terminus: Small ribosomal subunit protein bS16 (139 aa).

Residues 84–139 (KGEPAPAPLLQPAEKAARPSFEAIGGEDEGKGEAITQKKKADKKDEAAAESSASEA) are disordered.

This sequence belongs to the bacterial ribosomal protein bS16 family.

This chain is Small ribosomal subunit protein bS16, found in Streptomyces coelicolor (strain ATCC BAA-471 / A3(2) / M145).